Here is a 504-residue protein sequence, read N- to C-terminus: MAAQRRSLLQSEQQPSWTDDLPLCHLSGVGSASNRSYSADGKGTESHPPEDSWLKFRSENNCFLYGVFNGYDGNRVTNFVAQRLSAELLLGQLNAEHAEADVRRVLLQAFDVVERSFLESIDDALAEKASLQSQLPEGVPQHQLPPQYQKILERLKTLEREISGGAMAVVAVLLNNKLYVANVGTNRALLCKSTVDGLQVTQLNVDHTTENEDELFRLSQLGLDAGKIKQVGIICGQESTRRIGDYKVKYGYTDIDLLSAAKSKPIIAEPEIHGAQPLDGVTGFLVLMSEGLYKALEAAHGPGQANQEIAAMIDTEFAKQTSLDAVAQAVVDRVKRIHSDTFASGGERARFCPRHEDMTLLVRNFGYPLGEMSQPTPSPAPAAGGRVYPVSVPYSSAQSTSKTSVTLSLVMPSQGQMVNGAHSASTLDEATPTLTNQSPTLTLQSTNTHTQSSSSSSDGGLFRSRPAHSLPPGEDGRVEPYVDFAEFYRLWSVDHGEQSVVTAP.

Residues 1–22 (MAAQRRSLLQSEQQPSWTDDLP) are disordered. Ser7 carries the post-translational modification Phosphoserine. Polar residues predominate over residues 7–17 (SLLQSEQQPSW). The PPM-type phosphatase domain occupies 28-365 (GVGSASNRSY…EDMTLLVRNF (338 aa)). A Phosphoserine modification is found at Ser378. A glycan (O-linked (GlcNAc) serine) is linked at Ser395. Ser423 bears the Phosphoserine; by MAPK14 mark. Positions 430–439 (ATPTLTNQSP) are enriched in polar residues. The disordered stretch occupies residues 430 to 478 (ATPTLTNQSPTLTLQSTNTHTQSSSSSSDGGLFRSRPAHSLPPGEDGRV). The residue at position 431 (Thr431) is a Phosphothreonine; by MAPK14. Ser438 bears the Phosphoserine; by MAPK14 mark. Residues 440–457 (TLTLQSTNTHTQSSSSSS) show a composition bias toward low complexity. Phosphothreonine is present on Thr442.

As to quaternary structure, interacts with XIAP and BIRC7. Interacts with TRAF6 and MAP3K7; during IL-1 signaling. Identified in the TRIKA2 complex composed of MAP3K7, TAB1 and TAB2. Interacts with TRAF6 and MAPK14; these interactions allow MAPK14 autophosphorylation. Interacts with STING1; interaction takes place following cGAMP activation and promotes TAB1 recruitment to the endoplasmic reticulum, triggering MAP3K7/TAK1 activation and STING1 phosphorylation. In terms of processing, phosphorylated at all three sites Ser-423, Thr-431 and Ser-438 by MAPK14 when cells were exposed to cellular stresses, or stimulated with TNF-alpha, IL1 or LPS. These phosphorylations inhibit TAK1 activation by a feedback control mechanism. Dephosphorylated by DUSP14 at Ser-438, leading to TAB1-MAP3K7/TAK1 complex inactivation in T-cells. Ubiquitinated by MAP3K1 with 'Lys-63'-linked polyubiquitin; leading to activation of TAK1 and of JNK and p38 MAP kinases following EGF and TGF-beta stimulation. Ubiquitinated by ITCH with 'Lys-48'-linked polyubiquitin; leading to proteasomal degradation. Ubiquitinated by RNF114 during maternal-to-zygotic transition; leading to degradation. Post-translationally, (Microbial infection) Deubiquitinated by Y.enterocolitica YopP. In terms of processing, O-GlcNAcylated at Ser-395 by OGT is required for full MAP3K7/TAK1 activation upon stimulation with IL-1 or osmotic stress. Deglycosylated at Ser-395 by OGA. As to expression, ubiquitous.

It is found in the cytoplasm. The protein resides in the cytosol. It localises to the endoplasmic reticulum membrane. Its function is as follows. Key adapter protein that plays an essential role in JNK and NF-kappa-B activation and proinflammatory cytokines production in response to stimulation with TLRs and cytokines. Mechanistically, associates with the catalytic domain of MAP3K7/TAK1 to trigger MAP3K7/TAK1 autophosphorylation leading to its full activation. Similarly, associates with MAPK14 and triggers its autophosphorylation and subsequent activation. In turn, MAPK14 phosphorylates TAB1 and inhibits MAP3K7/TAK1 activation in a feedback control mechanism. Also plays a role in recruiting MAPK14 to the TAK1 complex for the phosphorylation of the TAB2 and TAB3 regulatory subunits. The polypeptide is TGF-beta-activated kinase 1 and MAP3K7-binding protein 1 (TAB1) (Homo sapiens (Human)).